A 317-amino-acid polypeptide reads, in one-letter code: Melanocyte-stimulating hormone receptor (317 aa).

Topologically, residues 1–37 (MPVQGSQRRLLGSLNSTPTATPHLGLAANQTGARCLE) are extracellular. A glycan (N-linked (GlcNAc...) asparagine) is linked at Asn-29. Residues 38 to 63 (MSIPDGLFLSLGLVSLVENVLVVTAI) form a helical membrane-spanning segment. Over 64 to 72 (AKNRNLHSP) the chain is Cytoplasmic. A helical membrane pass occupies residues 73-93 (MYCFICCLALSDLLVSGSNML). Over 94–118 (ETAVTLLLEAGALAARAAVVQQLDN) the chain is Extracellular. A helical membrane pass occupies residues 119 to 140 (VIDVITCSSMLSSLCFLGAIAV). Residues 141–163 (DRYISIFYALRYHSIVTLPRARR) lie on the Cytoplasmic side of the membrane. Residues 164-183 (AIAAIWVASVLCSTLFIAYY) traverse the membrane as a helical segment. The Extracellular portion of the chain corresponds to 184–191 (DHAAVLLC). The helical transmembrane segment at 192–211 (LVVFFLAMLVLMAVLYVHML) threads the bilayer. The Cytoplasmic portion of the chain corresponds to 212–240 (ARACQHAQGIARLHKRQRLAHQGFGLKGA). A helical membrane pass occupies residues 241–266 (ATLTILLGIFFLCWGPFFLHLTLIVL). Over 267–279 (CPQHPTCSCIFKN) the chain is Extracellular. A helical transmembrane segment spans residues 280–300 (FNLFLTLIICNAIIDPLIYAF). Over 301-317 (RSQELRRTLKEVLLCSW) the chain is Cytoplasmic. Residue Cys-315 is the site of S-palmitoyl cysteine attachment.

Belongs to the G-protein coupled receptor 1 family. Interacts with MGRN1, but does not undergo MGRN1-mediated ubiquitination; this interaction competes with GNAS-binding and thus inhibits agonist-induced cAMP production. Interacts with OPN3; the interaction results in a decrease in MC1R-mediated cAMP signaling and ultimately a decrease in melanin production in melanocytes.

It localises to the cell membrane. Functionally, receptor for MSH (alpha, beta and gamma) and ACTH. The activity of this receptor is mediated by G proteins which activate adenylate cyclase. Mediates melanogenesis, the production of eumelanin (black/brown) and phaeomelanin (red/yellow), via regulation of cAMP signaling in melanocytes. This chain is Melanocyte-stimulating hormone receptor (MC1R), found in Macaca nemestrina (Pig-tailed macaque).